A 109-amino-acid polypeptide reads, in one-letter code: UPF0060 membrane protein PCC8801_1733 (109 aa).

Helical transmembrane passes span 7–27 (LLYF…VWLW), 36–56 (YALL…LQTA), 58–78 (FGRV…LWGW), and 87–107 (SYDW…MYAP).

This sequence belongs to the UPF0060 family.

It is found in the cell inner membrane. The sequence is that of UPF0060 membrane protein PCC8801_1733 from Rippkaea orientalis (strain PCC 8801 / RF-1) (Cyanothece sp. (strain PCC 8801)).